The chain runs to 2410 residues: Reducing polyketide synthase FUB1 (2410 aa).

Positions 1–42 (MTLSNGSNGANGTSNGNGAHPSANGFHNAANGGANNGSANGG) are enriched in low complexity. Positions 1–52 (MTLSNGSNGANGTSNGNGAHPSANGFHNAANGGANNGSANGGAEHDAGRPQV) are disordered. Positions 57–479 (SSAIAVIGVS…GANAHAVLDD (423 aa)) constitute a Ketosynthase family 3 (KS3) domain. Residues cysteine 230, histidine 365, and histidine 403 each act as for beta-ketoacyl synthase activity in the active site. The malonyl-CoA:ACP transacylase (MAT) domain stretch occupies residues 608 to 929 (TFIFTGQGAQ…FSAIKRKQDA (322 aa)). Serine 699 functions as the For malonyltransferase activity in the catalytic mechanism. The N-terminal hotdog fold stretch occupies residues 994–1127 (LELLGVRDPR…GLVSTSYKHD (134 aa)). The PKS/mFAS DH domain maps to 994-1307 (LELLGVRDPR…TVPLRGASDS (314 aa)). The segment at 995 to 1302 (ELLGVRDPRS…LKGCKTVPLR (308 aa)) is dehydratase (DH) domain. Histidine 1026 acts as the Proton acceptor; for dehydratase activity in catalysis. Residues 1155 to 1307 (LPSVDPTVFY…TVPLRGASDS (153 aa)) are C-terminal hotdog fold. Aspartate 1220 serves as the catalytic Proton donor; for dehydratase activity. The interval 1714-2026 (GLLDTLEYLS…SGGHVGKIVL (313 aa)) is enoyl reductase (ER) domain. The tract at residues 2050–2226 (ATYVLIGGLG…AATSINLSLV (177 aa)) is ketoreductase (KR) domain. The region spanning 2329–2406 (EVYEIVLQQL…GFTKKVMAKS (78 aa)) is the Carrier domain. O-(pantetheine 4'-phosphoryl)serine is present on serine 2366.

It participates in mycotoxin biosynthesis. Functionally, reducing polyketide synthase; part of the gene cluster that mediates the biosynthesis of fusaric acid, a mycotoxin with low to moderate toxicity to animals and humans, but with high phytotoxic properties. L-aspartate is suggested as fusaric acid amino acid precursor that is activated and further processed to O-acetyl-L-homoserine by cluster enzymes aspartate kinase FUB3 and homoserine O-acetyltransferase FUB5, as well as enzymes of the primary metabolism. The polyketide synthase (PKS) FUB1 generates the triketide trans-2-hexenal which is presumptively released by the hydrolase FUB4 and linked to the NRPS-bound amino acid precursor by NAD(P)-dependent dehydrogenase FUB6. FUB1, FUB4, and the non-canonical NRPS Fub8 may form an enzyme complex. Further processing of the NRPS-bound intermediate might be carried out by FUB6 and the sulfhydrylase FUB7, enabling a spontaneous electrocyclization to close the carbon backbone of fusaric acid. Dihydrofusaric acid is likely to be released via reduction by the thioester reductase (TR) domain of FUB8 whereupon the final oxidation to fusaric acid may (also) be performed by the FMN-dependent dehydrogenase FUB9. This is Reducing polyketide synthase FUB1 from Gibberella fujikuroi (strain CBS 195.34 / IMI 58289 / NRRL A-6831) (Bakanae and foot rot disease fungus).